We begin with the raw amino-acid sequence, 258 residues long: Tryptophan synthase alpha chain (258 aa).

Residues glutamate 52 and aspartate 63 each act as proton acceptor in the active site.

It belongs to the TrpA family. As to quaternary structure, tetramer of two alpha and two beta chains.

It catalyses the reaction (1S,2R)-1-C-(indol-3-yl)glycerol 3-phosphate + L-serine = D-glyceraldehyde 3-phosphate + L-tryptophan + H2O. The protein operates within amino-acid biosynthesis; L-tryptophan biosynthesis; L-tryptophan from chorismate: step 5/5. Its function is as follows. The alpha subunit is responsible for the aldol cleavage of indoleglycerol phosphate to indole and glyceraldehyde 3-phosphate. The polypeptide is Tryptophan synthase alpha chain (Streptococcus pneumoniae (strain Taiwan19F-14)).